A 260-amino-acid polypeptide reads, in one-letter code: Triosephosphate isomerase (260 aa).

11-13 contributes to the substrate binding site; that stretch reads NWK. H103 serves as the catalytic Electrophile. The Proton acceptor role is filled by E175. Substrate contacts are provided by residues G181, S220, and 241–242; that span reads GG.

It belongs to the triosephosphate isomerase family. In terms of assembly, homodimer.

Its subcellular location is the cytoplasm. It carries out the reaction D-glyceraldehyde 3-phosphate = dihydroxyacetone phosphate. It participates in carbohydrate biosynthesis; gluconeogenesis. Its pathway is carbohydrate degradation; glycolysis; D-glyceraldehyde 3-phosphate from glycerone phosphate: step 1/1. In terms of biological role, involved in the gluconeogenesis. Catalyzes stereospecifically the conversion of dihydroxyacetone phosphate (DHAP) to D-glyceraldehyde-3-phosphate (G3P). This chain is Triosephosphate isomerase, found in Shewanella piezotolerans (strain WP3 / JCM 13877).